The following is a 213-amino-acid chain: Orotate phosphoribosyltransferase (213 aa).

Lys-26 is a 5-phospho-alpha-D-ribose 1-diphosphate binding site. 34–35 provides a ligand contact to orotate; it reads FF. 5-phospho-alpha-D-ribose 1-diphosphate contacts are provided by residues 72–73, Arg-99, Lys-100, Lys-103, His-105, and 124–132; these read YK and DDVITAGTA. The orotate site is built by Thr-128 and Arg-156.

Belongs to the purine/pyrimidine phosphoribosyltransferase family. PyrE subfamily. As to quaternary structure, homodimer. The cofactor is Mg(2+).

It carries out the reaction orotidine 5'-phosphate + diphosphate = orotate + 5-phospho-alpha-D-ribose 1-diphosphate. It participates in pyrimidine metabolism; UMP biosynthesis via de novo pathway; UMP from orotate: step 1/2. Functionally, catalyzes the transfer of a ribosyl phosphate group from 5-phosphoribose 1-diphosphate to orotate, leading to the formation of orotidine monophosphate (OMP). The chain is Orotate phosphoribosyltransferase from Vibrio atlanticus (strain LGP32) (Vibrio splendidus (strain Mel32)).